The primary structure comprises 349 residues: Carbamoyl phosphate synthase small chain (349 aa).

Residues 1 to 170 (MKAKLILENG…KYEISGEGKK (170 aa)) are CPSase. Residues serine 45, glycine 218, and glycine 220 each coordinate L-glutamine. Residues 170 to 349 (KVAIIDFGIK…IFDEFMKYAL (180 aa)) enclose the Glutamine amidotransferase type-1 domain. Residue cysteine 245 is the Nucleophile of the active site. L-glutamine-binding residues include leucine 246, glutamine 249, asparagine 287, glycine 289, and tyrosine 290. Active-site residues include histidine 327 and glutamate 329.

The protein belongs to the CarA family. Composed of two chains; the small (or glutamine) chain promotes the hydrolysis of glutamine to ammonia, which is used by the large (or ammonia) chain to synthesize carbamoyl phosphate. Tetramer of heterodimers (alpha,beta)4.

The enzyme catalyses hydrogencarbonate + L-glutamine + 2 ATP + H2O = carbamoyl phosphate + L-glutamate + 2 ADP + phosphate + 2 H(+). It catalyses the reaction L-glutamine + H2O = L-glutamate + NH4(+). It functions in the pathway amino-acid biosynthesis; L-arginine biosynthesis; carbamoyl phosphate from bicarbonate: step 1/1. The protein operates within pyrimidine metabolism; UMP biosynthesis via de novo pathway; (S)-dihydroorotate from bicarbonate: step 1/3. In terms of biological role, small subunit of the glutamine-dependent carbamoyl phosphate synthetase (CPSase). CPSase catalyzes the formation of carbamoyl phosphate from the ammonia moiety of glutamine, carbonate, and phosphate donated by ATP, constituting the first step of 2 biosynthetic pathways, one leading to arginine and/or urea and the other to pyrimidine nucleotides. The small subunit (glutamine amidotransferase) binds and cleaves glutamine to supply the large subunit with the substrate ammonia. This Clostridium perfringens (strain 13 / Type A) protein is Carbamoyl phosphate synthase small chain.